Here is a 94-residue protein sequence, read N- to C-terminus: Integration host factor subunit beta (94 aa).

It belongs to the bacterial histone-like protein family. In terms of assembly, heterodimer of an alpha and a beta chain.

Functionally, this protein is one of the two subunits of integration host factor, a specific DNA-binding protein that functions in genetic recombination as well as in transcriptional and translational control. The protein is Integration host factor subunit beta of Mannheimia succiniciproducens (strain KCTC 0769BP / MBEL55E).